Consider the following 189-residue polypeptide: Movement protein (189 aa).

The protein belongs to the tombusvirus/aureusvirus movement protein p22 family. As to quaternary structure, interacts with host protein HFI22. Phosphorylated.

It is found in the host membrane. Functionally, transports viral genome to neighboring plant cells directly through plasmosdesmata, without any budding. The movement protein allows efficient cell to cell propagation, by bypassing the host cell wall barrier. In Tomato bushy stunt virus (strain BS-3) (TBSV), this protein is Movement protein.